The following is a 608-amino-acid chain: MKWVTFLLLLFVSGSAFSRGVFRREAHKSEIAHRYNDLGEQHFKGLVLIAFSQYLQKCSYDEHAKLVQEVTDFAKTCVADESAANCDKSLHTLFGDKLCAIPNLRENYGELADCCTKQEPERNECFLQHKDDNPSLPPFERPEAEAMCTSFKENPTTFMGHYLHEVARRHPYFYAPELLYYAEQYNEILTQCCAEADKESCLTPKLDGVKEKALVSSVRQRMKCSSMQKFGERAFKAWAVARLSQTFPNADFAEITKLATDLTKVNKECCHGDLLECADDRAELAKYMCENQATISSKLQTCCDKPLLKKAHCLSEVEHDTMPADLPAIAADFVEDQEVCKNYAEAKDVFLGTFLYEYSRRHPDYSVSLLLRLAKKYEATLEKCCAEANPPACYGTVLAEFQPLVEEPKNLVKTNCDLYEKLGEYGFQNAILVRYTQKAPQVSTPTLVEAARNLGRVGTKCCTLPEDQRLPCVEDYLSAILNRVCLLHEKTPVSEHVTKCCSGSLVERRPCFSALTVDETYVPKEFKAETFTFHSDICTLPEKEKQIKKQTALAELVKHKPKATAEQLKTVMDDFAQFLDTCCKAADKDTCFSTEGPNLVTRCKDALA.

Positions 1–18 (MKWVTFLLLLFVSGSAFS) are cleaved as a signal peptide. The propeptide occupies 19–24 (RGVFRR). Albumin domains are found at residues 19–211 (RGVF…GVKE), 212–403 (KALV…EFQP), and 404–601 (LVEE…NLVT). A Cu cation-binding site is contributed by His-27. At Ser-29 the chain carries Phosphoserine. Residues Glu-30 and Asp-37 each coordinate Ca(2+). Cys-77 and Cys-86 are oxidised to a cystine. 2 positions are modified to phosphoserine: Ser-82 and Ser-89. Residue His-91 coordinates Zn(2+). Intrachain disulfides connect Cys-99–Cys-115, Cys-114–Cys-125, Cys-148–Cys-193, Cys-192–Cys-201, Cys-224–Cys-270, and Cys-269–Cys-277. Lys-229 carries the N6-succinyllysine modification. Glu-268 serves as a coordination point for Ca(2+). The Zn(2+) site is built by His-271 and Asp-273. Asp-273, Glu-276, and Asp-279 together coordinate Ca(2+). Disulfide bonds link Cys-289-Cys-303, Cys-302-Cys-313, Cys-340-Cys-385, Cys-384-Cys-393, Cys-416-Cys-462, Cys-461-Cys-472, Cys-485-Cys-501, and Cys-500-Cys-511. Ser-297 bears the Phosphoserine mark. Ser-443 bears the Phosphoserine mark. Phosphothreonine is present on residues Thr-444 and Thr-446. Lys-460 is modified (N6-succinyllysine). Phosphoserine is present on Ser-513. 2 cysteine pairs are disulfide-bonded: Cys-538–Cys-583 and Cys-582–Cys-591. An N6-succinyllysine modification is found at Lys-543. Lys-558 is modified (N6-methyllysine). Phosphothreonine is present on Thr-570. At Lys-588 the chain carries N6-succinyllysine.

This sequence belongs to the ALB/AFP/VDB family. In terms of assembly, part of a complex composed of complement component C3, CLCA1/CLCA3, A2ML1/OH and ALB/serum albumin. Interacts with FCGRT; this interaction regulates ALB homeostasis. Interacts with TASOR. In plasma, occurs in a covalently-linked complex with chromophore-bound alpha-1-microglobulin; this interaction does not prevent fatty acid binding to ALB. Phosphorylated by FAM20C in the extracellular medium. As to expression, plasma. Expressed in the granular cells within the cerebellum.

The protein resides in the secreted. In terms of biological role, binds water, Ca(2+), Na(+), K(+), fatty acids, hormones, bilirubin and drugs. Its main function is the regulation of the colloidal osmotic pressure of blood. Major zinc transporter in plasma, typically binds about 80% of all plasma zinc. Major calcium and magnesium transporter in plasma, binds approximately 45% of circulating calcium and magnesium in plasma. Potentially has more than two calcium-binding sites and might additionally bind calcium in a non-specific manner. The shared binding site between zinc and calcium at residue Asp-273 suggests a crosstalk between zinc and calcium transport in the blood. The rank order of affinity is zinc &gt; calcium &gt; magnesium. Binds to the bacterial siderophore enterobactin and inhibits enterobactin-mediated iron uptake of E.coli from ferric transferrin, and may thereby limit the utilization of iron and growth of enteric bacteria such as E.coli. Does not prevent iron uptake by the bacterial siderophore aerobactin. The polypeptide is Albumin (Alb) (Mus musculus (Mouse)).